The chain runs to 195 residues: Pyridoxal 5'-phosphate synthase subunit PdxT (195 aa).

46–48 (GES) is an L-glutamine binding site. Catalysis depends on Cys-78, which acts as the Nucleophile. L-glutamine contacts are provided by residues Arg-107 and 136–137 (IR). Active-site charge relay system residues include His-173 and Glu-175.

It belongs to the glutaminase PdxT/SNO family. In the presence of PdxS, forms a dodecamer of heterodimers. Only shows activity in the heterodimer.

The catalysed reaction is aldehydo-D-ribose 5-phosphate + D-glyceraldehyde 3-phosphate + L-glutamine = pyridoxal 5'-phosphate + L-glutamate + phosphate + 3 H2O + H(+). The enzyme catalyses L-glutamine + H2O = L-glutamate + NH4(+). The protein operates within cofactor biosynthesis; pyridoxal 5'-phosphate biosynthesis. Functionally, catalyzes the hydrolysis of glutamine to glutamate and ammonia as part of the biosynthesis of pyridoxal 5'-phosphate. The resulting ammonia molecule is channeled to the active site of PdxS. This Dehalococcoides mccartyi (strain ATCC BAA-2100 / JCM 16839 / KCTC 5957 / BAV1) protein is Pyridoxal 5'-phosphate synthase subunit PdxT.